The primary structure comprises 67 residues: Small ribosomal subunit protein eS17 (67 aa).

The protein belongs to the eukaryotic ribosomal protein eS17 family. As to quaternary structure, part of the 30S ribosomal subunit.

The sequence is that of Small ribosomal subunit protein eS17 from Pyrococcus furiosus (strain ATCC 43587 / DSM 3638 / JCM 8422 / Vc1).